A 287-amino-acid chain; its full sequence is Urease accessory protein UreD (287 aa).

This sequence belongs to the UreD family. As to quaternary structure, ureD, UreF and UreG form a complex that acts as a GTP-hydrolysis-dependent molecular chaperone, activating the urease apoprotein by helping to assemble the nickel containing metallocenter of UreC. The UreE protein probably delivers the nickel.

Its subcellular location is the cytoplasm. Functionally, required for maturation of urease via the functional incorporation of the urease nickel metallocenter. This chain is Urease accessory protein UreD, found in Ureaplasma parvum serovar 3 (strain ATCC 27815 / 27 / NCTC 11736).